The primary structure comprises 583 residues: SHC-transforming protein 1 (583 aa).

Met1 is subject to N-acetylmethionine. Disordered regions lie at residues 1-92 (MDLL…DDGE) and 113-137 (KLSGGGGRRTRVEGGQLGGEEWTRH). The segment covering 16–44 (ESLSSLEEGASGSTPPEELPSPSASSLGP) has biased composition (low complexity). A Phosphoserine modification is found at Ser36. The residue at position 139 (Ser139) is a Phosphoserine. Lys154 bears the N6-acetyllysine mark. The PID domain maps to 156–339 (MGPGVSYLVR…AGFDGSAWDE (184 aa)). The CH1 stretch occupies residues 340–487 (EEEEPPDHQY…SMAEQLRGEP (148 aa)). 2 positions are modified to phosphotyrosine: Tyr349 and Tyr350. A disordered region spans residues 372 to 416 (AAPGAARSTAPSAQTPSHLGATLPVGQPVGGDPEVRKQMPPPPPC). Tyr427 carries the post-translational modification Phosphotyrosine. Position 453 is a phosphoserine (Ser453). An SH2 domain is found at 488-579 (WFHGKLSRRE…GSELCLQQPV (92 aa)).

In terms of assembly, interacts with CPNE3; this interaction may mediate the binding of CPNE3 with ERBB2. Interacts with the Trk receptors NTRK1, NTRK2 and NTRK3; in a phosphotyrosine-dependent manner. Interacts with the NPXY motif of tyrosine-phosphorylated IGF1R and INSR in vitro via the PID domain. Once activated, binds to GRB2. Interacts with tyrosine-phosphorylated CD3T and DDR2. Interacts with the N-terminal region of APS. Interacts with phosphorylated LRP1 and IRS4. Interacts with INPP5D/SHIP1 and INPPL1/SHIP2. Interacts with ALK, GAB2, GRB7 and KIT. Interacts with PTPN6/SHP (tyrosine phosphorylated). Identified in a complex containing FGFR4, NCAM1, CDH2, PLCG1, FRS2, SRC, SHC1, GAP43 and CTTN. Interacts with FLT4 (tyrosine-phosphorylated). Interacts with EPHB1 and GRB2; activates the MAPK/ERK cascade to regulate cell migration. Interacts with PDGFRB (tyrosine-phosphorylated). Interacts with ERBB4. Interacts with TEK/TIE2 (tyrosine-phosphorylated). Interacts with PTK2/FAK1. Interacts with CEACAM1; this interaction is CEACAM1-phosphorylation-dependent and mediates interaction with EGFR or INSR resulting in decrease coupling of SHC1 to the MAPK3/ERK1-MAPK1/ERK2 pathway. Interacts (via PID domain) with PEAK1 (when phosphorylated). Found in a complex with PPP1CA, PPP1CC, SHC1 and PEAK1. In terms of processing, phosphorylated by activated epidermal growth factor receptor. Phosphorylated in response to KIT signaling. Tyrosine phosphorylated in response to FLT3 and FLT4 signaling and by ligand-activated ALK. Tyrosine phosphorylated by ligand-activated PDGFRB. Tyrosine phosphorylated by TEK/TIE2. May be tyrosine phosphorylated by activated PTK2/FAK1. Tyrosine phosphorylated by activated PTK2B/PYK2. Dephosphorylation by PTPN2 may regulate interaction with GRB2.

Its subcellular location is the cytoplasm. The protein resides in the cell junction. It is found in the focal adhesion. Signaling adapter that couples activated growth factor receptors to signaling pathways. Participates in a signaling cascade initiated by activated KIT and KITLG/SCF. Participates in signaling downstream of the angiopoietin receptor TEK/TIE2, and plays a role in the regulation of endothelial cell migration and sprouting angiogenesis. The chain is SHC-transforming protein 1 (SHC1) from Pongo abelii (Sumatran orangutan).